The primary structure comprises 507 residues: ATP synthase subunit alpha, chloroplastic (507 aa).

170-177 (GDRQTGKT) is a binding site for ATP.

It belongs to the ATPase alpha/beta chains family. F-type ATPases have 2 components, CF(1) - the catalytic core - and CF(0) - the membrane proton channel. CF(1) has five subunits: alpha(3), beta(3), gamma(1), delta(1), epsilon(1). CF(0) has four main subunits: a, b, b' and c.

The protein localises to the plastid. It is found in the chloroplast thylakoid membrane. It catalyses the reaction ATP + H2O + 4 H(+)(in) = ADP + phosphate + 5 H(+)(out). Its function is as follows. Produces ATP from ADP in the presence of a proton gradient across the membrane. The alpha chain is a regulatory subunit. The sequence is that of ATP synthase subunit alpha, chloroplastic from Solanum bulbocastanum (Wild potato).